The following is a 350-amino-acid chain: MEPKRIREGYLVKKGSVFNTWKPMWVVLLEDGIEFYKKKSDNNPKGMIPLKGSTLTSPCQDFGKRMFVLKITTTKQQDHFFQAAYLEERDAWVRDIKKAIKCIEGGQKFARKSTRRSIRLPETIDLGALYLSMKDPEKGIKELNLEKDKKVFNHCFTGSGVIDWLVSNKLVRNRQEGLMISASLLSEGYLQPASDLSKNAADGIAENPFLDNPDAFYYFPDSGFFCEENSSDDDIILKEEFRGIIIKQGCLLKQGHRRKNWKVRKFILREDPAYLHYYDPAGGEDPLGAIHLRGCVVTSVESNPDGKKSDEENLFEIITADEVHYYMQAATAKERTEWIKAIQVASRTGK.

Positions 4 to 101 (KRIREGYLVK…WVRDIKKAIK (98 aa)) constitute a PH 1 domain. N6-acetyllysine is present on lysine 64. Serine 113 and serine 117 each carry phosphoserine. A DEP domain is found at 136–221 (PEKGIKELNL…NPDAFYYFPD (86 aa)). One can recognise a PH 2 domain in the interval 244–347 (IIIKQGCLLK…WIKAIQVASR (104 aa)).

In terms of biological role, major protein kinase C substrate of platelets. The chain is Pleckstrin (Plek) from Rattus norvegicus (Rat).